The primary structure comprises 442 residues: Proline--tRNA ligase (442 aa).

It belongs to the class-II aminoacyl-tRNA synthetase family. ProS type 2 subfamily. In terms of assembly, homodimer.

It localises to the cytoplasm. The enzyme catalyses tRNA(Pro) + L-proline + ATP = L-prolyl-tRNA(Pro) + AMP + diphosphate. Functionally, catalyzes the attachment of proline to tRNA(Pro) in a two-step reaction: proline is first activated by ATP to form Pro-AMP and then transferred to the acceptor end of tRNA(Pro). This Brucella abortus (strain S19) protein is Proline--tRNA ligase.